Reading from the N-terminus, the 186-residue chain is TATA-box-binding protein (186 aa).

2 repeat units span residues 10–86 and 101–179.

Belongs to the TBP family.

In terms of biological role, general factor that plays a role in the activation of archaeal genes transcribed by RNA polymerase. Binds specifically to the TATA box promoter element which lies close to the position of transcription initiation. In Haloarcula marismortui (strain ATCC 43049 / DSM 3752 / JCM 8966 / VKM B-1809) (Halobacterium marismortui), this protein is TATA-box-binding protein.